The chain runs to 436 residues: tRNA(Ile)-lysidine synthase (436 aa).

Residue 21–26 participates in ATP binding; that stretch reads SGGVDS.

The protein belongs to the tRNA(Ile)-lysidine synthase family.

The protein localises to the cytoplasm. The catalysed reaction is cytidine(34) in tRNA(Ile2) + L-lysine + ATP = lysidine(34) in tRNA(Ile2) + AMP + diphosphate + H(+). Ligates lysine onto the cytidine present at position 34 of the AUA codon-specific tRNA(Ile) that contains the anticodon CAU, in an ATP-dependent manner. Cytidine is converted to lysidine, thus changing the amino acid specificity of the tRNA from methionine to isoleucine. This Aster yellows witches'-broom phytoplasma (strain AYWB) protein is tRNA(Ile)-lysidine synthase.